We begin with the raw amino-acid sequence, 514 residues long: tRNA-2-methylthio-N(6)-dimethylallyladenosine synthase (514 aa).

The region spanning 68–186 is the MTTase N-terminal domain; that stretch reads RTFLIKTYGC…LPEILEEAYL (119 aa). The [4Fe-4S] cluster site is built by Cys-77, Cys-113, Cys-147, Cys-223, Cys-227, and Cys-230. One can recognise a Radical SAM core domain in the interval 209–439; the sequence is REGSTKAWVN…NKKVGHYSEK (231 aa). The TRAM domain maps to 442–505; it reads NQYEGKTVTV…QYSLNGTFKE (64 aa).

This sequence belongs to the methylthiotransferase family. MiaB subfamily. In terms of assembly, monomer. It depends on [4Fe-4S] cluster as a cofactor.

The protein resides in the cytoplasm. It catalyses the reaction N(6)-dimethylallyladenosine(37) in tRNA + (sulfur carrier)-SH + AH2 + 2 S-adenosyl-L-methionine = 2-methylsulfanyl-N(6)-dimethylallyladenosine(37) in tRNA + (sulfur carrier)-H + 5'-deoxyadenosine + L-methionine + A + S-adenosyl-L-homocysteine + 2 H(+). Its function is as follows. Catalyzes the methylthiolation of N6-(dimethylallyl)adenosine (i(6)A), leading to the formation of 2-methylthio-N6-(dimethylallyl)adenosine (ms(2)i(6)A) at position 37 in tRNAs that read codons beginning with uridine. This is tRNA-2-methylthio-N(6)-dimethylallyladenosine synthase from Staphylococcus haemolyticus (strain JCSC1435).